Here is a 447-residue protein sequence, read N- to C-terminus: Signal recognition particle 54 kDa protein (447 aa).

Residues 103–110 (GVQGSGKT), 185–189 (DTAGR), and 245–248 (TKMD) contribute to the GTP site.

Belongs to the GTP-binding SRP family. SRP54 subfamily. As to quaternary structure, part of the signal recognition particle protein translocation system, which is composed of SRP and FtsY. Archaeal SRP consists of a 7S RNA molecule of 300 nucleotides and two protein subunits: SRP54 and SRP19.

It localises to the cytoplasm. It catalyses the reaction GTP + H2O = GDP + phosphate + H(+). Its function is as follows. Involved in targeting and insertion of nascent membrane proteins into the cytoplasmic membrane. Binds to the hydrophobic signal sequence of the ribosome-nascent chain (RNC) as it emerges from the ribosomes. The SRP-RNC complex is then targeted to the cytoplasmic membrane where it interacts with the SRP receptor FtsY. The protein is Signal recognition particle 54 kDa protein of Saccharolobus islandicus (strain Y.N.15.51 / Yellowstone #2) (Sulfolobus islandicus).